A 169-amino-acid chain; its full sequence is 16S rRNA aminocarboxypropyltransferase (169 aa).

S-adenosyl-L-methionine-binding residues include threonine 15, valine 65, leucine 88, and threonine 107.

It belongs to the TDD superfamily. TSR3 family.

It localises to the cytoplasm. It carries out the reaction an N(1)-methylpseudouridine in rRNA + S-adenosyl-L-methionine = N(1)-methyl-N(3)-[(3S)-3-amino-3-carboxypropyl]pseudouridine in rRNA + S-methyl-5'-thioadenosine + H(+). In terms of biological role, aminocarboxypropyltransferase that catalyzes the aminocarboxypropyl transfer on pseudouridine corresponding to position 914 in M.jannaschii 16S rRNA. It constitutes the last step in biosynthesis of the hypermodified N1-methyl-N3-(3-amino-3-carboxypropyl) pseudouridine (m1acp3-Psi). This chain is 16S rRNA aminocarboxypropyltransferase, found in Methanopyrus kandleri (strain AV19 / DSM 6324 / JCM 9639 / NBRC 100938).